We begin with the raw amino-acid sequence, 93 residues long: UPF0390 protein C24B10.18 (93 aa).

Positions 1-32 (MAQGEFKKKKNSSANKGGRVTKHSKNPKKGAR) are disordered. The span at 19-31 (RVTKHSKNPKKGA) shows a compositional bias: basic residues.

This sequence belongs to the UPF0390 family.

This Schizosaccharomyces pombe (strain 972 / ATCC 24843) (Fission yeast) protein is UPF0390 protein C24B10.18.